Consider the following 207-residue polypeptide: Coiled-coil domain-containing protein 124 homolog (207 aa).

Residues 1-90 are disordered; the sequence is MGNPKKRAEK…KAAKKNSSLD (90 aa). The stretch at 5–71 forms a coiled coil; the sequence is KKRAEKAEAA…RLEKEEMESL (67 aa). 2 stretches are compositionally biased toward basic and acidic residues: residues 9-28 and 41-65; these read EKAE…KKDA and NKKE…RLEK.

This sequence belongs to the CCDC124 family. In terms of assembly, associates with translationally inactive ribosomes in the nonrotated state.

The protein localises to the cytoplasm. Its subcellular location is the nucleus. Ribosome-binding protein involved in ribosome hibernation by associating with translationally inactive ribosomes. Required for translational recovery after starvation from stationary phase. May facilitate rapid translation reactivation by stabilizing the recycling-competent state of inactive ribosomes. This chain is Coiled-coil domain-containing protein 124 homolog, found in Schizosaccharomyces pombe (strain 972 / ATCC 24843) (Fission yeast).